We begin with the raw amino-acid sequence, 410 residues long: CinA-like protein (410 aa).

Belongs to the CinA family.

The chain is CinA-like protein from Anaeromyxobacter sp. (strain Fw109-5).